Consider the following 372-residue polypeptide: Glutamate 5-kinase (372 aa).

ATP is bound at residue Lys-14. Ser-54, Asp-141, and Asn-153 together coordinate substrate. Thr-173–Asp-174 lines the ATP pocket. Residues Arg-280–Ile-358 form the PUA domain.

Belongs to the glutamate 5-kinase family.

It localises to the cytoplasm. The catalysed reaction is L-glutamate + ATP = L-glutamyl 5-phosphate + ADP. It participates in amino-acid biosynthesis; L-proline biosynthesis; L-glutamate 5-semialdehyde from L-glutamate: step 1/2. Functionally, catalyzes the transfer of a phosphate group to glutamate to form L-glutamate 5-phosphate. This chain is Glutamate 5-kinase, found in Nitrosospira multiformis (strain ATCC 25196 / NCIMB 11849 / C 71).